We begin with the raw amino-acid sequence, 58 residues long: SPbeta prophage-derived uncharacterized protein YonT (58 aa).

The chain crosses the membrane as a helical span at residues 6-26 (GIVVAFLISLTVLTINSLTIV). The interval 35–58 (GTSKKKKRIRKRLRPKRQRQRIRR) is disordered. Basic residues predominate over residues 36 to 58 (TSKKKKRIRKRLRPKRQRQRIRR).

It localises to the cell membrane. This is SPbeta prophage-derived uncharacterized protein YonT (yonT) from Bacillus subtilis (strain 168).